A 355-amino-acid polypeptide reads, in one-letter code: MIEEKKKCIGLIFGGYSNEHDVSISSAKTVFNAFNSEINKQRFNVKAFYINKYGDWIDNDISVKILIGEIEHKKTKKQELFNQKKINFLDGIEFQNIDIWFPLLHGFNGEDGSIHGLLKFTNKPLVGCGILGSALGMDKILMKTIFSNLKIPQVNYLVIQNEDLNNLEVKNKLIIEIIKKLNFPVFVKPSNSGSSLGISKVINKSALLKALEKAWEIDARILVEEGLETREIECGIIGNSELLTSEIGEVEYGSDWYDYDSKYNSNNKITIPAKIDSKITKQIKEIAIQSCRTLNIFGFARVDFFLEKSSNKIFLNEINTIPGFTKKSMFPMLWEASGLNIEQLVAKLVDISLDL.

Residues 143-350 (KTIFSNLKIP…IEQLVAKLVD (208 aa)) form the ATP-grasp domain. 178–233 (IKKLNFPVFVKPSNSGSSLGISKVINKSALLKALEKAWEIDARILVEEGLETREIE) is a binding site for ATP. Mg(2+) contacts are provided by aspartate 303, glutamate 317, and asparagine 319.

This sequence belongs to the D-alanine--D-alanine ligase family. Mg(2+) serves as cofactor. Requires Mn(2+) as cofactor.

The protein localises to the cytoplasm. It carries out the reaction 2 D-alanine + ATP = D-alanyl-D-alanine + ADP + phosphate + H(+). It functions in the pathway cell wall biogenesis; peptidoglycan biosynthesis. Its function is as follows. Cell wall formation. This is D-alanine--D-alanine ligase from Prochlorococcus marinus (strain MIT 9312).